The chain runs to 67 residues: Large ribosomal subunit protein uL29c (67 aa).

It belongs to the universal ribosomal protein uL29 family.

Its subcellular location is the plastid. It is found in the chloroplast. In Porphyra purpurea (Red seaweed), this protein is Large ribosomal subunit protein uL29c (rpl29).